Consider the following 215-residue polypeptide: tRNA (guanine-N(7)-)-methyltransferase (215 aa).

S-adenosyl-L-methionine is bound by residues Asp-43, Glu-68, Asn-95, and Asp-121. Asp-121 is a catalytic residue. 2 residues coordinate substrate: Lys-125 and Asp-157.

It belongs to the class I-like SAM-binding methyltransferase superfamily. TrmB family.

It catalyses the reaction guanosine(46) in tRNA + S-adenosyl-L-methionine = N(7)-methylguanosine(46) in tRNA + S-adenosyl-L-homocysteine. The protein operates within tRNA modification; N(7)-methylguanine-tRNA biosynthesis. Its function is as follows. Catalyzes the formation of N(7)-methylguanine at position 46 (m7G46) in tRNA. The polypeptide is tRNA (guanine-N(7)-)-methyltransferase (Trichormus variabilis (strain ATCC 29413 / PCC 7937) (Anabaena variabilis)).